We begin with the raw amino-acid sequence, 155 residues long: Putative pre-16S rRNA nuclease (155 aa).

The protein belongs to the YqgF nuclease family.

It localises to the cytoplasm. Its function is as follows. Could be a nuclease involved in processing of the 5'-end of pre-16S rRNA. The polypeptide is Putative pre-16S rRNA nuclease (Xanthomonas axonopodis pv. citri (strain 306)).